The following is a 121-amino-acid chain: Small ribosomal subunit protein uS13 (121 aa).

Positions 91–121 (HRRGLPVRGQKTKNNARTRKGPVKTVANKKK) are disordered.

It belongs to the universal ribosomal protein uS13 family. Part of the 30S ribosomal subunit. Forms a loose heterodimer with protein S19. Forms two bridges to the 50S subunit in the 70S ribosome.

In terms of biological role, located at the top of the head of the 30S subunit, it contacts several helices of the 16S rRNA. In the 70S ribosome it contacts the 23S rRNA (bridge B1a) and protein L5 of the 50S subunit (bridge B1b), connecting the 2 subunits; these bridges are implicated in subunit movement. Contacts the tRNAs in the A and P-sites. The protein is Small ribosomal subunit protein uS13 of Staphylococcus haemolyticus (strain JCSC1435).